The following is a 298-amino-acid chain: Putative GATA zinc finger domain-containing protein 25 (298 aa).

The stretch at 4–37 (DNKNKNDNYQESIQRIVNQRNNLLKEIENKINQQ) forms a coiled coil. Residues 148 to 227 (QQQLQQSHTK…RGRPSKPKPE (80 aa)) are disordered. Over residues 183-202 (EENEENEENEENEENEENEE) the composition is skewed to acidic residues. Residues 203 to 212 (NKEKDVEVAK) are compositionally biased toward basic and acidic residues. Residues 214–223 (NKPKRGRPSK) are compositionally biased toward basic residues. The segment at 229-256 (CFRYGTRSCPYWRKNVIKGELVDVCNAC) adopts a GATA-type; degenerate zinc-finger fold.

This Dictyostelium discoideum (Social amoeba) protein is Putative GATA zinc finger domain-containing protein 25 (gtaY).